Consider the following 194-residue polypeptide: GTP cyclohydrolase-2 (194 aa).

50-54 (RIHSE) contacts GTP. 3 residues coordinate Zn(2+): cysteine 55, cysteine 66, and cysteine 68. GTP-binding positions include 94–96 (EGR) and threonine 116. Residue aspartate 128 is the Proton acceptor of the active site. The active-site Nucleophile is the arginine 130. Residues threonine 151 and lysine 156 each contribute to the GTP site.

This sequence belongs to the GTP cyclohydrolase II family. Requires Zn(2+) as cofactor.

The enzyme catalyses GTP + 4 H2O = 2,5-diamino-6-hydroxy-4-(5-phosphoribosylamino)-pyrimidine + formate + 2 phosphate + 3 H(+). Its pathway is cofactor biosynthesis; riboflavin biosynthesis; 5-amino-6-(D-ribitylamino)uracil from GTP: step 1/4. In terms of biological role, catalyzes the conversion of GTP to 2,5-diamino-6-ribosylamino-4(3H)-pyrimidinone 5'-phosphate (DARP), formate and pyrophosphate. This is GTP cyclohydrolase-2 from Helicobacter hepaticus (strain ATCC 51449 / 3B1).